The chain runs to 301 residues: Ribosomal RNA small subunit methyltransferase H (301 aa).

S-adenosyl-L-methionine is bound by residues 31–33 (GGY), aspartate 49, phenylalanine 76, aspartate 97, and glutamine 104.

This sequence belongs to the methyltransferase superfamily. RsmH family.

It localises to the cytoplasm. The enzyme catalyses cytidine(1402) in 16S rRNA + S-adenosyl-L-methionine = N(4)-methylcytidine(1402) in 16S rRNA + S-adenosyl-L-homocysteine + H(+). Specifically methylates the N4 position of cytidine in position 1402 (C1402) of 16S rRNA. This Ehrlichia ruminantium (strain Gardel) protein is Ribosomal RNA small subunit methyltransferase H.